A 401-amino-acid chain; its full sequence is Argininosuccinate synthase (401 aa).

Residues 8–16 (AYSGGLDTS) and Ala35 contribute to the ATP site. The L-citrulline site is built by Tyr86 and Ser91. Gly116 contacts ATP. 3 residues coordinate L-aspartate: Thr118, Asn122, and Asp123. An L-citrulline-binding site is contributed by Asn122. Residues Arg126, Ser175, Ser184, Glu260, and Tyr272 each contribute to the L-citrulline site.

The protein belongs to the argininosuccinate synthase family. Type 1 subfamily. Homotetramer.

The protein localises to the cytoplasm. It carries out the reaction L-citrulline + L-aspartate + ATP = 2-(N(omega)-L-arginino)succinate + AMP + diphosphate + H(+). It functions in the pathway amino-acid biosynthesis; L-arginine biosynthesis; L-arginine from L-ornithine and carbamoyl phosphate: step 2/3. This Carboxydothermus hydrogenoformans (strain ATCC BAA-161 / DSM 6008 / Z-2901) protein is Argininosuccinate synthase.